Reading from the N-terminus, the 782-residue chain is Chaoptin (782 aa).

22 LRR repeats span residues 16 to 37 (SLLT…PSDA), 43 to 64 (RLEE…SFHF), 67 to 88 (SLKK…TFQG), 93 to 114 (DLTE…TFAD), 117 to 138 (QLEQ…AFMN), 141 to 162 (SLKR…TFQN), 165 to 186 (ELED…IFDQ), 191 to 212 (GMFH…PSVP), 224 to 245 (NIKV…FFRP), 249 to 270 (SLMQ…LFGN), 273 to 294 (HLQV…TFRN), 297 to 318 (KLQW…LFRF), 321 to 342 (NLRI…LFRE), 344 to 364 (GLER…TSLS), 370 to 391 (TLSE…GQLA), 395 to 416 (CLSW…TFKG), 419 to 442 (RLAS…SFQG), 446 to 467 (TLLH…STPN), 468 to 488 (LLSL…VAGN), 491 to 512 (SLRY…THSL), 514 to 535 (ELRH…SLLG), and 539 to 560 (QLEE…AFCK). Residues Asn196, Asn234, and Asn262 are each glycosylated (N-linked (GlcNAc...) asparagine). Residues Asn454 and Asn488 are each glycosylated (N-linked (GlcNAc...) asparagine). N-linked (GlcNAc...) asparagine glycosylation is present at Asn530. Residues Asn618, Asn648, and Asn667 are each glycosylated (N-linked (GlcNAc...) asparagine).

It belongs to the chaoptin family.

It localises to the cell membrane. Functionally, required for photoreceptor cell morphogenesis. Mediates homophilic cellular adhesion. This chain is Chaoptin (CHP), found in Tribolium castaneum (Red flour beetle).